Reading from the N-terminus, the 425-residue chain is Histone-binding protein RBBP4-B (425 aa).

At Ala2 the chain carries N-acetylalanine. WD repeat units lie at residues 32–125 (YDLV…NHEG), 126–175 (EVNR…RLRG), 176–223 (HQKE…KTIF), 225–270 (GHTA…HSVD), 271–314 (AHTA…HSFE), 315–371 (SHKD…FIHG), and 372–404 (GHTAKISDFSWNPNEPWVICSVSEDNIMQVWQM).

This sequence belongs to the WD repeat RBAP46/RBAP48/MSI1 family. As to quaternary structure, binds directly to histone H4, probably via helix 1 of the histone fold, a region that is not accessible when histone H4 is in chromatin. Probably forms a large corepressor complex that contains ncor1, sin3a, hdac1-A and/or hdac1-B, hdac2, rbbp4-A and/or rbbp4-B and possibly rbbp7.

It localises to the nucleus. The protein localises to the chromosome. The protein resides in the telomere. In terms of biological role, core histone-binding subunit that may target chromatin assembly factors, chromatin remodeling factors and histone deacetylases to their histone substrates in a manner that is regulated by nucleosomal DNA. Component of several complexes which regulate chromatin metabolism. The polypeptide is Histone-binding protein RBBP4-B (rbbp4-b) (Xenopus laevis (African clawed frog)).